Reading from the N-terminus, the 213-residue chain is Superoxide dismutase [Mn] (213 aa).

The Mn(2+) site is built by histidine 27, histidine 82, aspartate 168, and histidine 172.

Belongs to the iron/manganese superoxide dismutase family. In terms of assembly, homodimer. It depends on Mn(2+) as a cofactor.

The enzyme catalyses 2 superoxide + 2 H(+) = H2O2 + O2. Its function is as follows. Destroys superoxide anion radicals which are normally produced within the cells and which are toxic to biological systems. The polypeptide is Superoxide dismutase [Mn] (sodA) (Mannheimia haemolytica (Pasteurella haemolytica)).